We begin with the raw amino-acid sequence, 226 residues long: Probable transcriptional regulatory protein y4xI (226 aa).

The Response regulatory domain maps to 1 to 114; it reads MRTLLVDTDL…ELIARMRALL (114 aa). A DNA-binding region (ompR/PhoB-type) is located at residues 122 to 220; that stretch reads CPIIEFGNLH…VRGIGYTLEL (99 aa).

It is found in the cytoplasm. The protein is Probable transcriptional regulatory protein y4xI of Sinorhizobium fredii (strain NBRC 101917 / NGR234).